A 923-amino-acid chain; its full sequence is Protein prickle (923 aa).

The interval 1–196 is disordered; it reads MSYPYQKSHH…HPFHSPASAA (196 aa). A compositionally biased stretch (low complexity) spans 11-34; the sequence is QTQQPQQNGHPQHQLMLQQQQQAD. A compositionally biased stretch (basic residues) spans 37–49; it reads PHHHHHHHVHHAT. Low complexity-rich tracts occupy residues 59–73 and 106–118; these read RSPL…LYSG and MPGM…PPGM. Positions 122 to 134 are enriched in gly residues; it reads LGGGGGGGGGGSA. Low complexity-rich tracts occupy residues 152–169 and 184–196; these read STVT…SARS and SSHH…ASAA. Positions 275–383 constitute a PET domain; the sequence is GGGHNYSQSD…TVKQITTTLI (109 aa). 3 consecutive LIM zinc-binding domains span residues 382 to 446, 447 to 507, and 508 to 570; these read LICE…ETLK, PRCS…MFAE, and YCDY…GEPP. Disordered stretches follow at residues 571–668 and 703–867; these read TPSD…LDLT and GPIA…SSAD. The span at 709 to 718 shows a compositional bias: gly residues; sequence NGNGPTGGGP. Polar residues predominate over residues 738 to 748; the sequence is ESPSFSGTNSP. Positions 777–786 are enriched in basic and acidic residues; sequence HSIKEVRFEG. Positions 792-805 are enriched in polar residues; that stretch reads LPRTKSYCQRNGGQ. Residues 817–827 are compositionally biased toward acidic residues; it reads SDDDELAEDET. The span at 840 to 852 shows a compositional bias: basic and acidic residues; it reads QREQQRPVDDSDA. Over residues 853-865 the composition is skewed to low complexity; the sequence is RSVCSTCSSSSSS.

Belongs to the prickle / espinas / testin family. In terms of assembly, interacts with dsh; PET and LIM domains interact with dsh DEP domain, in wing cells. Interacts with Vang in photoreceptor cells.

It is found in the cell membrane. Functionally, acts in a planar cell polarity (PCP) complex; polarization along the apical/basal axis of epithelial cells. PCP signaling in the wing disk requires the receptor fz and the cytoplasmic proteins dsh and pk. These act in a feedback loop leading to activation of the jnk cascade and subsequent polarized arrangement of hairs and bristles. Dgo and pk compete with one another for dsh binding, thereby modulating fz dsh activity and ensuring tight control over fz PCP signaling. Vang, stan and pk function together to regulate the establishment of tissue polarity in the adult eye. This is Protein prickle from Anopheles gambiae (African malaria mosquito).